The chain runs to 55 residues: Large ribosomal subunit protein bL32c (55 aa).

It belongs to the bacterial ribosomal protein bL32 family.

It is found in the plastid. The protein localises to the chloroplast. The polypeptide is Large ribosomal subunit protein bL32c (Daucus carota (Wild carrot)).